The primary structure comprises 687 residues: DNA ligase (687 aa).

Residues 33–37 (DAEFD), 83–84 (SL), and Glu113 each bind NAD(+). The active-site N6-AMP-lysine intermediate is Lys115. The NAD(+) site is built by Arg136, Glu176, Lys292, and Lys316. Zn(2+) contacts are provided by Cys410, Cys413, Cys429, and Cys435. The region spanning 599-687 (SVPRTLAGVT…GPPAEVGEPT (89 aa)) is the BRCT domain.

The protein belongs to the NAD-dependent DNA ligase family. LigA subfamily. The cofactor is Mg(2+). Requires Mn(2+) as cofactor.

The catalysed reaction is NAD(+) + (deoxyribonucleotide)n-3'-hydroxyl + 5'-phospho-(deoxyribonucleotide)m = (deoxyribonucleotide)n+m + AMP + beta-nicotinamide D-nucleotide.. DNA ligase that catalyzes the formation of phosphodiester linkages between 5'-phosphoryl and 3'-hydroxyl groups in double-stranded DNA using NAD as a coenzyme and as the energy source for the reaction. It is essential for DNA replication and repair of damaged DNA. This Mycobacterium marinum (strain ATCC BAA-535 / M) protein is DNA ligase.